We begin with the raw amino-acid sequence, 250 residues long: MPINRIALGSHQEVYHPGALKAAFAEFISTLIFVFAGQGSGMAFSKLTGGGPTTPAGLIAAAVAHAFALFVAVSVGANISGGHVNPAVTFGAFVGGNITLFRGLLYWVAQLLGSTVACFLLRFSTGGQATGTFGLTGVSVWEALVLEIVMTFGLVYTVYATAVDPKKGSLGTIAPIAIGFIVGANILVGGAFDGASMNPAVSFGPALVSWEWGYQWVYWVGPLIGGGLAGVIYELLFISHTHEQLPSTDY.

The next 2 helical transmembrane spans lie at 24-44 (FAEF…GMAF) and 56-76 (AGLI…VSVG). Residues 85–87 (NPA) carry the NPA 1 motif. 3 helical membrane passes run 104–126 (LLYW…FSTG), 143–163 (ALVL…ATAV), and 172–192 (TIAP…GGAF). The NPA 2 signature appears at 198–200 (NPA). The chain crosses the membrane as a helical span at residues 218 to 238 (YWVGPLIGGGLAGVIYELLFI).

This sequence belongs to the MIP/aquaporin (TC 1.A.8) family. TIP (TC 1.A.8.10) subfamily. As to expression, expressed in roots, shoots, leaves, tassels, ears and embryos. Expressed in meristems and zones of cell enlargement: tips of primary and lateral roots, leaf primordia, and male and female inflorescence meristems. Highly expressed in the root epidermis and endodermis, parenchyma cells surrounding mature xylem vessels in the root and the stem, phloem companion cells and a ring of cells around the phloem strand in the stem and the leaf sheath, and the basal endosperm transfer cells in developing kernels.

The protein resides in the vacuole membrane. In terms of biological role, water channel required to facilitate the transport of water across cell membrane. May support the rapid influx of water into vacuoles during cell expansion, permit osmotic equilibration between the cytosol and the vacuolar content and rapid transcellular water flow through living cells. Its function is impaired by Hg(2+). In Zea mays (Maize), this protein is Aquaporin TIP1-1 (TIP1-1).